The primary structure comprises 382 residues: Cytochrome b (382 aa).

The next 4 membrane-spanning stretches (helical) occupy residues 33-53, 77-98, 113-133, and 178-198; these read FGSL…FLAM, WLVR…YTHI, WTVG…GYVL, and FFAF…IHLL. Heme b-binding residues include His83 and His97. Positions 182 and 196 each coordinate heme b. His201 serves as a coordination point for a ubiquinone. 4 consecutive transmembrane segments (helical) span residues 226 to 246, 288 to 308, 320 to 340, and 347 to 367; these read LKDL…ALLT, LGGV…PFLQ, LTQL…WIGG, and FVSI…IIIP.

It belongs to the cytochrome b family. As to quaternary structure, the cytochrome bc1 complex contains 3 respiratory subunits (MT-CYB, CYC1 and UQCRFS1), 2 core proteins (UQCRC1 and UQCRC2) and probably 6 low-molecular weight proteins. The cofactor is heme b.

The protein resides in the mitochondrion inner membrane. Functionally, component of the ubiquinol-cytochrome c reductase complex (complex III or cytochrome b-c1 complex) that is part of the mitochondrial respiratory chain. The b-c1 complex mediates electron transfer from ubiquinol to cytochrome c. Contributes to the generation of a proton gradient across the mitochondrial membrane that is then used for ATP synthesis. The chain is Cytochrome b (mt-cyb) from Sigmops gracilis (Slender fangjaw).